A 206-amino-acid polypeptide reads, in one-letter code: Large ribosomal subunit protein uL4 (206 aa).

Residues 43 to 78 are disordered; the sequence is ARSGNRKQKDREEVHHTTKKPWRQKGTGRARAGMSS. Positions 49-58 are enriched in basic and acidic residues; that stretch reads KQKDREEVHH. The span at 59 to 70 shows a compositional bias: basic residues; the sequence is TTKKPWRQKGTG.

It belongs to the universal ribosomal protein uL4 family. As to quaternary structure, part of the 50S ribosomal subunit.

In terms of biological role, one of the primary rRNA binding proteins, this protein initially binds near the 5'-end of the 23S rRNA. It is important during the early stages of 50S assembly. It makes multiple contacts with different domains of the 23S rRNA in the assembled 50S subunit and ribosome. Its function is as follows. Forms part of the polypeptide exit tunnel. This Janthinobacterium sp. (strain Marseille) (Minibacterium massiliensis) protein is Large ribosomal subunit protein uL4.